Consider the following 309-residue polypeptide: L-aminoadipate-semialdehyde dehydrogenase-phosphopantetheinyl transferase (309 aa).

Residues R47, 86–91 (RTSKGK), and 108–111 (NISH) each bind CoA. 2 residues coordinate Mg(2+): D129 and E181. A CoA-binding site is contributed by 181-185 (ESFIK).

Belongs to the P-Pant transferase superfamily. AcpS family. As to quaternary structure, monomer. It depends on Mg(2+) as a cofactor.

The protein localises to the cytoplasm. The protein resides in the cytosol. It catalyses the reaction apo-[ACP] + CoA = holo-[ACP] + adenosine 3',5'-bisphosphate + H(+). The catalysed reaction is apo-[ACP] + acetyl-CoA = acetyl-[ACP] + adenosine 3',5'-bisphosphate + H(+). Its function is as follows. Catalyzes the post-translational modification of target proteins by phosphopantetheine. Can transfer the 4'-phosphopantetheine moiety from coenzyme A, regardless of whether the CoA is presented in the free thiol form or as an acetyl thioester, to a serine residue of a broad range of acceptors including the acyl carrier domain of FASN. The chain is L-aminoadipate-semialdehyde dehydrogenase-phosphopantetheinyl transferase (Aasdhppt) from Rattus norvegicus (Rat).